The following is a 231-amino-acid chain: MKVGIIGAMEQEVTILKEAMTNCQTVNKAGCTFFSGQINDVDVVLLQSGIGKVAAAVGTTILLDEYQPDVVINTGSAGGFDSSLNLGDVVISTEVRHHDADVTAFGYEIGQMAGQPAAFKADEKLMDLAEKALEQMANTHAVRGLICTGDAFVCTAERQAFIRENFPSVIAVEMEASAIAQTCHQFNTPFVVVRAISDVADKESPMSFEEFLPLAAKSSSEMVFKMLELVK.

Residue glutamate 12 is the Proton acceptor of the active site. Residues glycine 78, valine 153, and 174-175 (ME) each bind substrate. Aspartate 198 (proton donor) is an active-site residue.

Belongs to the PNP/UDP phosphorylase family. MtnN subfamily.

The enzyme catalyses S-adenosyl-L-homocysteine + H2O = S-(5-deoxy-D-ribos-5-yl)-L-homocysteine + adenine. The catalysed reaction is S-methyl-5'-thioadenosine + H2O = 5-(methylsulfanyl)-D-ribose + adenine. It carries out the reaction 5'-deoxyadenosine + H2O = 5-deoxy-D-ribose + adenine. It participates in amino-acid biosynthesis; L-methionine biosynthesis via salvage pathway; S-methyl-5-thio-alpha-D-ribose 1-phosphate from S-methyl-5'-thioadenosine (hydrolase route): step 1/2. Its function is as follows. Catalyzes the irreversible cleavage of the glycosidic bond in both 5'-methylthioadenosine (MTA) and S-adenosylhomocysteine (SAH/AdoHcy) to adenine and the corresponding thioribose, 5'-methylthioribose and S-ribosylhomocysteine, respectively. Also cleaves 5'-deoxyadenosine, a toxic by-product of radical S-adenosylmethionine (SAM) enzymes, into 5-deoxyribose and adenine. The chain is 5'-methylthioadenosine/S-adenosylhomocysteine nucleosidase from Vibrio parahaemolyticus serotype O3:K6 (strain RIMD 2210633).